We begin with the raw amino-acid sequence, 115 residues long: Probable 4-amino-4-deoxy-L-arabinose-phosphoundecaprenol flippase subunit ArnE (115 aa).

The next 3 membrane-spanning stretches (helical) occupy residues 42-62, 65-85, and 93-112; these read PWPWLALLALGLGLLCWLLLL, VEVGSAYPMLALNFVLVTLAA, and VDRRHLAGLLLIVAGVALLG. The region spanning 46 to 113 is the EamA domain; the sequence is LALLALGLGL…IVAGVALLGR (68 aa).

Belongs to the ArnE family. As to quaternary structure, heterodimer of ArnE and ArnF.

The protein resides in the cell inner membrane. It functions in the pathway bacterial outer membrane biogenesis; lipopolysaccharide biosynthesis. Translocates 4-amino-4-deoxy-L-arabinose-phosphoundecaprenol (alpha-L-Ara4N-phosphoundecaprenol) from the cytoplasmic to the periplasmic side of the inner membrane. The protein is Probable 4-amino-4-deoxy-L-arabinose-phosphoundecaprenol flippase subunit ArnE of Pseudomonas aeruginosa (strain LESB58).